A 318-amino-acid polypeptide reads, in one-letter code: Acetyl-coenzyme A carboxylase carboxyl transferase subunit alpha (318 aa).

Residues 38 to 292 (KLEKRLAKLE…NKTITKSLHA (255 aa)) form the CoA carboxyltransferase C-terminal domain.

This sequence belongs to the AccA family. In terms of assembly, acetyl-CoA carboxylase is a heterohexamer composed of biotin carboxyl carrier protein (AccB), biotin carboxylase (AccC) and two subunits each of ACCase subunit alpha (AccA) and ACCase subunit beta (AccD).

It is found in the cytoplasm. It catalyses the reaction N(6)-carboxybiotinyl-L-lysyl-[protein] + acetyl-CoA = N(6)-biotinyl-L-lysyl-[protein] + malonyl-CoA. The protein operates within lipid metabolism; malonyl-CoA biosynthesis; malonyl-CoA from acetyl-CoA: step 1/1. Functionally, component of the acetyl coenzyme A carboxylase (ACC) complex. First, biotin carboxylase catalyzes the carboxylation of biotin on its carrier protein (BCCP) and then the CO(2) group is transferred by the carboxyltransferase to acetyl-CoA to form malonyl-CoA. The sequence is that of Acetyl-coenzyme A carboxylase carboxyl transferase subunit alpha from Listeria monocytogenes serovar 1/2a (strain ATCC BAA-679 / EGD-e).